A 495-amino-acid polypeptide reads, in one-letter code: Cytochrome P450 710A1 (495 aa).

Residues 5–25 (VSIFASLAPYLISAFLLFLLV) traverse the membrane as a helical segment. C434 contributes to the heme binding site.

It belongs to the cytochrome P450 family. It depends on heme as a cofactor. As to expression, expressed in the vascular tissues of roots, shoots and leaves. Expressed in root tips and sepals. Very low expression in stems and siliques.

Its subcellular location is the membrane. The enzyme catalyses 5-dehydroepisterol + NADPH + O2 + H(+) = ergosta-5,7,22,24(28)-tetraen-3beta-ol + NADP(+) + 2 H2O. It participates in steroid biosynthesis; sterol biosynthesis. Required to form the C-22 double bond in the sterol side chain. Possesses in vitro C-22 desaturase activity toward beta-sitosterol and produces stigmasterol. No activity with campesterol. The chain is Cytochrome P450 710A1 from Arabidopsis thaliana (Mouse-ear cress).